Consider the following 226-residue polypeptide: 7-cyano-7-deazaguanine synthase (226 aa).

An ATP-binding site is contributed by 8 to 18; the sequence is ISGGLDSTTCL. Cys188, Cys198, Cys201, and Cys204 together coordinate Zn(2+).

Belongs to the QueC family. The cofactor is Zn(2+).

It carries out the reaction 7-carboxy-7-deazaguanine + NH4(+) + ATP = 7-cyano-7-deazaguanine + ADP + phosphate + H2O + H(+). It functions in the pathway purine metabolism; 7-cyano-7-deazaguanine biosynthesis. Catalyzes the ATP-dependent conversion of 7-carboxy-7-deazaguanine (CDG) to 7-cyano-7-deazaguanine (preQ(0)). This is 7-cyano-7-deazaguanine synthase from Coxiella burnetii (strain Dugway 5J108-111).